The following is a 351-amino-acid chain: Thiamine-phosphate synthase (351 aa).

Residues 1-128 are unknown; the sequence is MKNPNIIQPE…SKIASEIRYE (128 aa). The thiamine-phosphate synthase stretch occupies residues 129-351; it reads IYTLEIEILN…IIIKELSHEN (223 aa). 4-amino-2-methyl-5-(diphosphooxymethyl)pyrimidine contacts are provided by residues 180-184 and asparagine 212; that span reads QHRFK. Mg(2+) is bound by residues asparagine 213 and aspartate 232. Serine 251 serves as a coordination point for 4-amino-2-methyl-5-(diphosphooxymethyl)pyrimidine. Residue 277–279 participates in 2-[(2R,5Z)-2-carboxy-4-methylthiazol-5(2H)-ylidene]ethyl phosphate binding; the sequence is TLT. Position 280 (lysine 280) interacts with 4-amino-2-methyl-5-(diphosphooxymethyl)pyrimidine. 2-[(2R,5Z)-2-carboxy-4-methylthiazol-5(2H)-ylidene]ethyl phosphate is bound by residues glycine 307 and 327–328; that span reads VS.

This sequence belongs to the thiamine-phosphate synthase family.

It catalyses the reaction 2-[(2R,5Z)-2-carboxy-4-methylthiazol-5(2H)-ylidene]ethyl phosphate + 4-amino-2-methyl-5-(diphosphooxymethyl)pyrimidine + 2 H(+) = thiamine phosphate + CO2 + diphosphate. It carries out the reaction 2-(2-carboxy-4-methylthiazol-5-yl)ethyl phosphate + 4-amino-2-methyl-5-(diphosphooxymethyl)pyrimidine + 2 H(+) = thiamine phosphate + CO2 + diphosphate. The catalysed reaction is 4-methyl-5-(2-phosphooxyethyl)-thiazole + 4-amino-2-methyl-5-(diphosphooxymethyl)pyrimidine + H(+) = thiamine phosphate + diphosphate. Its pathway is cofactor biosynthesis; thiamine diphosphate biosynthesis; thiamine phosphate from 4-amino-2-methyl-5-diphosphomethylpyrimidine and 4-methyl-5-(2-phosphoethyl)-thiazole: step 1/1. In terms of biological role, condenses 4-methyl-5-(beta-hydroxyethyl)thiazole monophosphate (THZ-P) and 2-methyl-4-amino-5-hydroxymethyl pyrimidine pyrophosphate (HMP-PP) to form thiamine monophosphate (TMP). The sequence is that of Thiamine-phosphate synthase from Prochlorococcus marinus subsp. pastoris (strain CCMP1986 / NIES-2087 / MED4).